The following is a 157-amino-acid chain: 2-C-methyl-D-erythritol 2,4-cyclodiphosphate synthase (157 aa).

A divalent metal cation is bound by residues aspartate 8, histidine 10, and histidine 42. Aspartate 8 to histidine 10 contacts 4-CDP-2-C-methyl-D-erythritol 2-phosphate. Residues aspartate 56–glycine 58, serine 132–glutamate 135, phenylalanine 139, and arginine 142 each bind 4-CDP-2-C-methyl-D-erythritol 2-phosphate.

Belongs to the IspF family. In terms of assembly, homotrimer. Requires a divalent metal cation as cofactor.

It carries out the reaction 4-CDP-2-C-methyl-D-erythritol 2-phosphate = 2-C-methyl-D-erythritol 2,4-cyclic diphosphate + CMP. It participates in isoprenoid biosynthesis; isopentenyl diphosphate biosynthesis via DXP pathway; isopentenyl diphosphate from 1-deoxy-D-xylulose 5-phosphate: step 4/6. Involved in the biosynthesis of isopentenyl diphosphate (IPP) and dimethylallyl diphosphate (DMAPP), two major building blocks of isoprenoid compounds. Catalyzes the conversion of 4-diphosphocytidyl-2-C-methyl-D-erythritol 2-phosphate (CDP-ME2P) to 2-C-methyl-D-erythritol 2,4-cyclodiphosphate (ME-CPP) with a corresponding release of cytidine 5-monophosphate (CMP). The chain is 2-C-methyl-D-erythritol 2,4-cyclodiphosphate synthase from Dehalococcoides mccartyi (strain CBDB1).